The chain runs to 183 residues: Small ribosomal subunit protein uS4c (183 aa).

The S4 RNA-binding domain maps to 82-143 (MRLDNILFRL…KQRSKALIQN (62 aa)).

The protein belongs to the universal ribosomal protein uS4 family. In terms of assembly, part of the 30S ribosomal subunit. Contacts protein S5. The interaction surface between S4 and S5 is involved in control of translational fidelity.

It is found in the plastid. The protein resides in the chloroplast. Functionally, one of the primary rRNA binding proteins, it binds directly to 16S rRNA where it nucleates assembly of the body of the 30S subunit. In terms of biological role, with S5 and S12 plays an important role in translational accuracy. This Freesia sp. (strain Lejeune 1997) protein is Small ribosomal subunit protein uS4c (rps4).